The following is a 131-amino-acid chain: Thioredoxin H4-1 (131 aa).

Residues 3–129 enclose the Thioredoxin domain; the sequence is SCVGKERSDE…LEKKVAALAD (127 aa). Active-site nucleophile residues include C55 and C58. A disulfide bridge connects residues C55 and C58.

Belongs to the thioredoxin family. Plant H-type subfamily.

The protein resides in the cytoplasm. Functionally, probable thiol-disulfide oxidoreductase that may be involved in the redox regulation of a number of cytosolic enzymes. In Oryza sativa subsp. japonica (Rice), this protein is Thioredoxin H4-1.